The chain runs to 417 residues: Imidazolonepropionase (417 aa).

His-80 and His-82 together coordinate Fe(3+). His-80 and His-82 together coordinate Zn(2+). Arg-89, Tyr-152, and His-187 together coordinate 4-imidazolone-5-propanoate. Residue Tyr-152 participates in N-formimidoyl-L-glutamate binding. His-252 contributes to the Fe(3+) binding site. His-252 is a binding site for Zn(2+). 4-imidazolone-5-propanoate is bound at residue Glu-255. Asp-326 serves as a coordination point for Fe(3+). Asp-326 lines the Zn(2+) pocket. N-formimidoyl-L-glutamate is bound by residues Asn-328 and Gly-330. Ser-331 serves as a coordination point for 4-imidazolone-5-propanoate.

This sequence belongs to the metallo-dependent hydrolases superfamily. HutI family. Zn(2+) is required as a cofactor. Requires Fe(3+) as cofactor.

It localises to the cytoplasm. The catalysed reaction is 4-imidazolone-5-propanoate + H2O = N-formimidoyl-L-glutamate. Its pathway is amino-acid degradation; L-histidine degradation into L-glutamate; N-formimidoyl-L-glutamate from L-histidine: step 3/3. Its function is as follows. Catalyzes the hydrolytic cleavage of the carbon-nitrogen bond in imidazolone-5-propanoate to yield N-formimidoyl-L-glutamate. It is the third step in the universal histidine degradation pathway. This Bacteroides fragilis (strain YCH46) protein is Imidazolonepropionase.